Consider the following 451-residue polypeptide: 3-carboxy-cis,cis-muconate cycloisomerase (451 aa).

Belongs to the class-II fumarase/aspartase family.

It carries out the reaction 2-(carboxymethyl)-5-oxo-2,5-dihydro-2-furoate = 3-carboxy-cis,cis-muconate + H(+). Its function is as follows. Catalyzes an anti cycloisomerization. This is 3-carboxy-cis,cis-muconate cycloisomerase (pcaB) from Bradyrhizobium diazoefficiens (strain JCM 10833 / BCRC 13528 / IAM 13628 / NBRC 14792 / USDA 110).